A 497-amino-acid chain; its full sequence is Keratin, type II cytoskeletal 8 (497 aa).

The interval 2 to 108 is head; that stretch reads TSYQRTVTVR…DPRIGQVRLE (107 aa). The interval 109–149 is coil 1A; sequence EKEQIKTLNNQFAGFIDKVRYLEQQNKLLETKWQLLQNQTT. In terms of domain architecture, IF rod spans 109 to 421; the sequence is EKEQIKTLNN…KLLEGEESRL (313 aa). The linker 1 stretch occupies residues 145-162; it reads QNQTTPSRSNLDSMFEAY. Residues 163–254 are coil 1B; the sequence is ISNLRRQLDT…QIYDEEIREL (92 aa). A linker 12 region spans residues 255–278; it reads QTQIQDTSVIVQMDNNRQLDLDNI. The tract at residues 279-417 is coil 2; that stretch reads IAEVRAQYED…ATYRKLLEGE (139 aa). Residues 418 to 497 form a tail region; it reads ESRLASGIQA…VSERSNIVKE (80 aa).

The protein belongs to the intermediate filament family. In terms of assembly, heterotetramer of two type I and two type II keratins. Keratin-8 associates with keratin-18. In terms of tissue distribution, expressed in skin.

The protein localises to the cytoplasm. It localises to the nucleus. The protein resides in the nucleoplasm. Its subcellular location is the nucleus matrix. Together with KRT19, helps to link the contractile apparatus to dystrophin at the costameres of striated muscle. This is Keratin, type II cytoskeletal 8 from Protopterus aethiopicus (Marbled lungfish).